A 329-amino-acid polypeptide reads, in one-letter code: 1-phosphatidylinositol phosphodiesterase (329 aa).

The first 31 residues, 1-31 (MSNKKLILKLFICSTIFITFVFALHDKRVVA), serve as a signal peptide directing secretion. One can recognise a PI-PLC X-box domain in the interval 51–194 (NIPLARISIP…ARGKIVLLKR (144 aa)). His63 serves as the catalytic Proton acceptor. Residue His113 is the Proton donor of the active site.

The protein resides in the secreted. It carries out the reaction a 1,2-diacyl-sn-glycero-3-phospho-(1D-myo-inositol) = 1D-myo-inositol 1,2-cyclic phosphate + a 1,2-diacyl-sn-glycerol. Cleaves glycosylphosphatidylinositol (GPI) and phosphatidylinositol (PI) anchors but not PI phosphates. The polypeptide is 1-phosphatidylinositol phosphodiesterase (Bacillus thuringiensis).